The following is a 604-amino-acid chain: Afamin (604 aa).

The first 21 residues, 1–21, serve as a signal peptide directing secretion; sequence MKQLKLTGFVIFFFFLTESLT. 3 consecutive Albumin domains span residues 22-210, 211-403, and 404-598; these read LPTQ…EPFI, YYLK…RFNE, and TTEK…PKLA. 17 disulfide bridges follow: Cys77–Cys86, Cys99–Cys114, Cys113–Cys124, Cys148–Cys193, Cys192–Cys201, Cys224–Cys270, Cys269–Cys277, Cys289–Cys303, Cys302–Cys313, Cys340–Cys385, Cys384–Cys393, Cys416–Cys462, Cys461–Cys470, Cys483–Cys499, Cys498–Cys509, Cys536–Cys581, and Cys580–Cys589. The N-linked (GlcNAc...) asparagine glycan is linked to Asn109. The segment at 215–319 is binding pocket for hydrophobic ligands; sequence ALSSYQKNAC…RGECIIYSNK (105 aa). An N-linked (GlcNAc...) asparagine glycan is attached at Asn434.

Belongs to the ALB/AFP/VDB family. In terms of assembly, forms a 1:1 complex with Wnt family members; interacts with WNT3A and WNT5A. Interacts with WNT1, WNT2B, WNT3, WNT7A, WNT7B, WNT8, WNT9A, WNT9B, WNT10A and WNT10B. In terms of processing, N-glycosylated; more than 90% of the glycans are sialylated.

The protein localises to the secreted. Functions as a carrier for hydrophobic molecules in body fluids. Essential for the solubility and activity of lipidated Wnt family members, including WNT1, WNT2B, WNT3, WNT3A, WNT5A, WNT7A, WNT7B, WNT8, WNT9A, WNT9B, WNT10A and WNT10B. Binds vitamin E. May transport vitamin E in body fluids under conditions where the lipoprotein system is not sufficient. May be involved in the transport of vitamin E across the blood-brain barrier. This is Afamin (AFM) from Bos taurus (Bovine).